A 538-amino-acid chain; its full sequence is NADH-quinone oxidoreductase subunit N (538 aa).

The next 14 membrane-spanning stretches (helical) occupy residues 12-32, 47-67, 81-101, 144-164, 170-190, 205-225, 248-268, 294-314, 317-337, 343-363, 371-391, 423-443, 472-492, and 502-522; these read IAYGALSPMLIMFGVAVVSVL, LALATVGILGAFVAVVALSGS, PTLYLQGLILVASGLALVVMA, GITQTEIFPLTLFAIAGMMLF, LLTMFVALEVFSLPLYVMCAL, YFLLGAFSSAFFLFGSAFVYG, FLLLGVAMLSVGLLFKVGAVP, IAAFGALLRVLYVALPGITTD, PVLWGVAIATMLIGSIGAVTQ, MLAYSAVAHTGFLLTGVAAAN, LFYLAAYGFSTVGAFIIAGLV, APVLGIVFALFLLAFAGIPLT, SAIAAYFYVRVIVVMFFADPV, and GPAVTVSIAVSALITVLLGVA.

The protein belongs to the complex I subunit 2 family. In terms of assembly, NDH-1 is composed of 14 different subunits. Subunits NuoA, H, J, K, L, M, N constitute the membrane sector of the complex.

It is found in the cell membrane. The enzyme catalyses a quinone + NADH + 5 H(+)(in) = a quinol + NAD(+) + 4 H(+)(out). Its function is as follows. NDH-1 shuttles electrons from NADH, via FMN and iron-sulfur (Fe-S) centers, to quinones in the respiratory chain. The immediate electron acceptor for the enzyme in this species is believed to be a menaquinone. Couples the redox reaction to proton translocation (for every two electrons transferred, four hydrogen ions are translocated across the cytoplasmic membrane), and thus conserves the redox energy in a proton gradient. This is NADH-quinone oxidoreductase subunit N from Mycobacteroides abscessus (strain ATCC 19977 / DSM 44196 / CCUG 20993 / CIP 104536 / JCM 13569 / NCTC 13031 / TMC 1543 / L948) (Mycobacterium abscessus).